A 41-amino-acid chain; its full sequence is Ornatin-A2 (41 aa).

Residues R33–D35 carry the Cell attachment site motif.

Belongs to the ornatin family.

It localises to the secreted. Potent inhibitor of fibrinogen interaction with platelet receptors expressed on glycoprotein IIb-IIIa complex. May prevent blood from clotting during either feeding and/or storage of ingested blood. In Placobdella ornata (Turtle leech), this protein is Ornatin-A2.